A 279-amino-acid polypeptide reads, in one-letter code: MTENIISVDHLTYQYDENQAPALTDVSFTVHAGEWLAIVGHNGSGKSTLAKSLDGLLPFTQGSVTVGGITLTPETVWQVREQIGMIFQNPDNQFVGATVEDDVAFGLENRQISRDEMVPRVQAALAQVGMTSFAQREPSSLSGGQKQRVALAGIVAIAPKILILDEATSMLDPQGRIEMLAIVRQLRQQQNLTVISITHDIDEAASADRVLVIDDGRLVDEAVPSQIFERGTQLVEMGLDLPFTEKLKAALRQRGITPPTTYQTAAEMEEWLWQSLSNT.

Residues 6 to 240 (ISVDHLTYQY…GTQLVEMGLD (235 aa)) enclose the ABC transporter domain. Residue 40–47 (GHNGSGKS) coordinates ATP.

It belongs to the ABC transporter superfamily. Energy-coupling factor EcfA family. Forms a stable energy-coupling factor (ECF) transporter complex composed of 2 membrane-embedded substrate-binding proteins (S component), 2 ATP-binding proteins (A component) and 2 transmembrane proteins (T component).

The protein resides in the cell membrane. ATP-binding (A) component of a common energy-coupling factor (ECF) ABC-transporter complex. Unlike classic ABC transporters this ECF transporter provides the energy necessary to transport a number of different substrates. The polypeptide is Energy-coupling factor transporter ATP-binding protein EcfA1 (Levilactobacillus brevis (strain ATCC 367 / BCRC 12310 / CIP 105137 / JCM 1170 / LMG 11437 / NCIMB 947 / NCTC 947) (Lactobacillus brevis)).